A 352-amino-acid polypeptide reads, in one-letter code: Sortase SrtE1 (352 aa).

Basic and acidic residues-rich tracts occupy residues 1-10 and 34-45; these read MTALRPERDS and RYEESAAGEENR. Residues 1–132 are disordered; the sequence is MTALRPERDS…RQARARKPGA (132 aa). The Cytoplasmic portion of the chain corresponds to 1–139; that stretch reads MTALRPERDS…PGAAVVASRA (139 aa). Residues 15-79 form a required for protein stability region; it reads DQGSSYGQPY…TGPIGGGPDG (65 aa). Gly residues predominate over residues 71–82; that stretch reads GPIGGGPDGGGR. Basic residues predominate over residues 83-97; that stretch reads AARRKAAKRRHGRRG. Residues 140-160 form a helical membrane-spanning segment; the sequence is IGEIFITTGVLMLLFVTYQLW. The Extracellular portion of the chain corresponds to 161–352; sequence WTNVRAHAQA…SKGKPDALVS (192 aa). Catalysis depends on residues histidine 251 and cysteine 320. Arginine 329 (proton donor) is an active-site residue.

The protein belongs to the bacterial sortase family. Class E subfamily.

The protein resides in the cell membrane. The enzyme catalyses The enzyme catalyzes a cell wall sorting reaction in which a surface protein with a sorting signal containing a LPXTG motif is cleaved between the Thr and Gly residue. The resulting threonine carboxyl end of the protein is covalently attached to a pentaglycine cross-bridge of peptidoglycan.. Functionally, transpeptidase that anchors surface proteins to the cell wall. Recognizes both Leu-Ala-x-Thr-Gly and Leu-Pro-x-Thr-Gly, with a preference for the former. Unlike the S.aureus sortase it cleaves not only the Thr-Gly motif but also the Ala-X bond; Ala-Glu and Ala-His bonds are better substrates than the Thr-Gly motif in vitro. Among its possible substrates are the chaplins ChpA, ChpB and ChpC; this enzyme is less important for ChpC attachment than is SrtE2. A double knockout mutant of srtE1 and srtE2 shows a developmental defect in aerial hyphae formation more dramatic than that due to chaplin deletion. The sequence is that of Sortase SrtE1 from Streptomyces coelicolor (strain ATCC BAA-471 / A3(2) / M145).